The following is a 405-amino-acid chain: FAD-dependent monooxygenase thnD (405 aa).

5 residues coordinate FAD: E30, A45, R106, D308, and G321.

This sequence belongs to the paxM FAD-dependent monooxygenase family. The cofactor is FAD.

Functionally, FAD-dependent monooxygenase; part of the gene cluster that produces the tetronate natural products trihazones. Transcription analysis of thnD confirmed this gene is expressed, hence its role in the biosynthetic pathway remains cryptic. The pathway begins with the formation of trihazone A by the hybrid PKS-NRPS synthetase thnA and the trans-enoyl reductase thnE. Trihazone A is further decarboxylated by the 2-oxoglutarate-dependent dioxygenase thnC to produce trihazone D. The function of the FAD-dependent monooxygenase thnD has still to be identified. The chain is FAD-dependent monooxygenase thnD from Trichoderma harzianum (Hypocrea lixii).